The chain runs to 106 residues: Iron-sulfur cluster assembly protein CyaY (106 aa).

The protein belongs to the frataxin family.

Its function is as follows. Involved in iron-sulfur (Fe-S) cluster assembly. May act as a regulator of Fe-S biogenesis. This chain is Iron-sulfur cluster assembly protein CyaY, found in Escherichia coli O7:K1 (strain IAI39 / ExPEC).